The following is a 1478-amino-acid chain: FYVE and coiled-coil domain-containing protein 1 (1478 aa).

Alanine 2 carries the N-acetylalanine modification. The stretch at 4–33 (TNAESQLQRIIRDLQDAVTELSKEFQEAGE) forms a coiled coil. The RUN domain maps to 36–169 (TDDSTSLHKF…VQFDLASRGF (134 aa)). Serine 196 is modified (phosphoserine). Positions 225-280 (NNEALEGFDEMRLELDQLEVREKQLRERMQQLDRENQELRAAVSQQGEQLQTERER) form a coiled coil. Serine 342 is subject to Phosphoserine. At threonine 381 the chain carries Phosphothreonine. Coiled coils occupy residues 394 to 555 (SDAA…MLER) and 596 to 1151 (QEAQ…KDAL). Positions 586-613 (GKPEEEQRGLQEAQLDDTKVQEGSQEEE) are disordered. Residue serine 878 is modified to Phosphoserine. The FYVE-type zinc-finger motif lies at 1173 to 1231 (DTEANHCLDCKREFSWMVRRHHCRICGRIFCYYCCNNYVLSKHGGKKERCCRACFQKLS). Zn(2+)-binding residues include cysteine 1179, cysteine 1182, cysteine 1195, cysteine 1198, cysteine 1203, cysteine 1206, cysteine 1223, and cysteine 1226. Positions 1231–1261 (SEGPGSPDSSGSGTSQGEPSPALSPASPGPQ) are enriched in low complexity. 2 disordered regions span residues 1231–1277 (SEGP…PPDD) and 1294–1332 (SGSS…DMPV). Composition is skewed to polar residues over residues 1294 to 1305 (SGSSLPETPTET) and 1314 to 1324 (EQDTTSTSLTP). The 130-residue stretch at 1337-1466 (EICLLKSGEL…SKKVFYHLTV (130 aa)) folds into the GOLD domain.

In terms of assembly, can form homodimers. Interacts (via C-terminus) with MAP1LC3B. Interacts with RAB7A; the interaction with RAB7A induces FYCO1 recruitment to late endosomal/lysosomal compartments. Interacts with MAP1LC3B. In terms of tissue distribution, expressed in heart and skeletal muscle.

It is found in the cytoplasmic vesicle. Its subcellular location is the autophagosome. The protein resides in the endosome. It localises to the lysosome. Its function is as follows. May mediate microtubule plus end-directed vesicle transport. The protein is FYVE and coiled-coil domain-containing protein 1 (FYCO1) of Homo sapiens (Human).